Consider the following 109-residue polypeptide: MRNPLLQPWLTEKSTRLTEQQGQYAFMVKAAADKTDIKRAIEEKFGVEVRSVRTANCLGKSKRQYTRKGLIAGKKNDWKKAVITLKQGQEINYYSGSTDQGEEKKSKKG.

It belongs to the universal ribosomal protein uL23 family. In terms of assembly, part of the 50S ribosomal subunit. Contacts protein L29, and trigger factor when it is bound to the ribosome.

In terms of biological role, one of the early assembly proteins it binds 23S rRNA. One of the proteins that surrounds the polypeptide exit tunnel on the outside of the ribosome. Forms the main docking site for trigger factor binding to the ribosome. The protein is Large ribosomal subunit protein uL23 of Chlorobium phaeobacteroides (strain BS1).